The sequence spans 478 residues: MSVLLVGVSHRTAPVPVLERVAVTDTDRPKLTDKLLASSHISEAMIVSTCNRVEIYAVVDAFHGALAEVGELLADHSGLDLTDLHRHAYVRYSEAAAEHLFAVASGLDSMVIGEQQILGQIRTAYASSDAQQAAGRTLHELAQQALRVGKRVHSETGIDSAGASVVSVALDRAAGIVGAGGLTGRTAVVVGAGSMGGLSVAHLTRAGIGRIVVVNRTRERAEHLADTARSNGVAAEALELAELPDAMAQADVLVTCTGAVGAVVTLADTHRALAQPGRDSERPLVICDLGLPRDVEPAVSGLPGVTVLDMESLQRDPAAGAAASDADAARTIVAAELANYLAGQRLAEVTPTVTALRQRAADVVEAELMRLDSRLPGLDDPERDEVARTVRRVVDKLLHAPTVRVKQLASAPGGDSYAAALRELFELSPGSVEAVAKPTELGGADLGAIDITDGFIAGQDPRLRRFVADDNRGKESQA.

Substrate contacts are provided by residues 49 to 52 (TCNR), Ser109, 114 to 116 (EQQ), and Gln120. The active-site Nucleophile is the Cys50. NADP(+) is bound at residue 191–196 (GAGSMG).

The protein belongs to the glutamyl-tRNA reductase family. In terms of assembly, homodimer.

The enzyme catalyses (S)-4-amino-5-oxopentanoate + tRNA(Glu) + NADP(+) = L-glutamyl-tRNA(Glu) + NADPH + H(+). Its pathway is porphyrin-containing compound metabolism; protoporphyrin-IX biosynthesis; 5-aminolevulinate from L-glutamyl-tRNA(Glu): step 1/2. Catalyzes the NADPH-dependent reduction of glutamyl-tRNA(Glu) to glutamate 1-semialdehyde (GSA). This is Glutamyl-tRNA reductase from Rhodococcus opacus (strain B4).